A 60-amino-acid chain; its full sequence is Three-finger toxin Mnn I (60 aa).

4 disulfide bridges follow: Cys3–Cys22, Cys17–Cys39, Cys41–Cys52, and Cys53–Cys58.

Belongs to the three-finger toxin family. Short-chain subfamily. Type I alpha-neurotoxin sub-subfamily. In terms of tissue distribution, expressed by the venom gland.

It localises to the secreted. Functionally, binds to muscle nicotinic acetylcholine receptor (nAChR) and inhibit acetylcholine from binding to the receptor, thereby impairing neuromuscular transmission. The sequence is that of Three-finger toxin Mnn I from Micrurus nigrocinctus (Central American coral snake).